The primary structure comprises 82 residues: MNAKTLFVVFLIGMLVTEQVEAGIWSSIKNLASKAWNSDIGQSLRNKAAGAINKFVADKIGVTPSQAASMTLDEIVDAMYYD.

The signal sequence occupies residues 1 to 22; the sequence is MNAKTLFVVFLIGMLVTEQVEA. The propeptide occupies 70–82; it reads MTLDEIVDAMYYD.

The protein belongs to the non-disulfide-bridged peptide (NDBP) superfamily. Long chain multifunctional peptide (group 2) family. As to expression, expressed by the venom gland.

Its subcellular location is the secreted. It is found in the target cell membrane. Its function is as follows. Displays significant potent antimicrobial activity against clinical isolates of Gram-negative multidrug resistant strains of E.coli, P.aeruginosa and A.baumanii with MIC values as low as 4.4 uM. Additionally, it displays low cytolytic and hemolytic activity against human erythrocytes reaching 50% hemolysis at 100 uM. The polypeptide is Vejovine (Vaejovis mexicanus (Mexican scorpion)).